Reading from the N-terminus, the 98-residue chain is Small ribosomal subunit protein uS17 (98 aa).

Belongs to the universal ribosomal protein uS17 family. Part of the 30S ribosomal subunit.

In terms of biological role, one of the primary rRNA binding proteins, it binds specifically to the 5'-end of 16S ribosomal RNA. The chain is Small ribosomal subunit protein uS17 from Mesomycoplasma hyopneumoniae (strain 232) (Mycoplasma hyopneumoniae).